We begin with the raw amino-acid sequence, 139 residues long: Large-conductance mechanosensitive channel (139 aa).

3 helical membrane-spanning segments follow: residues Val-14–Ala-34, Ile-38–Pro-58, and Gly-82–Ile-102.

It belongs to the MscL family. In terms of assembly, homopentamer.

The protein localises to the cell inner membrane. In terms of biological role, channel that opens in response to stretch forces in the membrane lipid bilayer. May participate in the regulation of osmotic pressure changes within the cell. The polypeptide is Large-conductance mechanosensitive channel (Methylobacterium radiotolerans (strain ATCC 27329 / DSM 1819 / JCM 2831 / NBRC 15690 / NCIMB 10815 / 0-1)).